The primary structure comprises 633 residues: Chaperone protein dnaK2 (633 aa).

Residue Thr-197 is modified to Phosphothreonine; by autocatalysis. Residues 513-532 (AEQNASSDKERREKIERKNQ) show a composition bias toward basic and acidic residues. Disordered stretches follow at residues 513–534 (AEQNASSDKERREKIERKNQAD) and 598–633 (QQAGGGAAPGAAPQDGGTTSSDGGDDVIDADFTETK). A compositionally biased stretch (low complexity) spans 606-619 (PGAAPQDGGTTSSD). The segment covering 620–633 (GGDDVIDADFTETK) has biased composition (acidic residues).

This sequence belongs to the heat shock protein 70 family.

Functionally, acts as a chaperone. This Nostoc sp. (strain PCC 7120 / SAG 25.82 / UTEX 2576) protein is Chaperone protein dnaK2 (dnaK2).